A 937-amino-acid chain; its full sequence is MSDYKTTLNLPETGFPMRGDLAKREPDMLKRWYEQDLYGIIRNAKKGKKTFILHDGPPYANGSIHIGHSVNKILKDIIVKSKGLSGYDSPYVPGWDCHGLPIELKVEQLIGKPGEKVSAAEFRAECRKYAAEQVAGQKADFIRLGVLGDWDRPYLTMDFKTEANIIRALGRIIENGHLHKGAKPVHWCADCGSALAEAEVEYYDKTSPSIDVAFNASDVAAVLAKFGVSSVDGPVSLVIWTTTPWTLPANRAISLNAEFDYQLVQIDGQALILAADLVESVMKRAGVTQWTVLGDCKGADLELLRFKHPFLSFDVPAILGDHVTLDAGTGAVHTAGGHGPDDYVISQKYNLEIANPVGPNGCYLSGTYPELDGKFVFKANDLIVEILREKGMLLHVEKLQHSYPCCWRHKSPIIFRATPQWFVSMDQKGLRKQSLSEIKGVQWIPDWGQARIEAMVANRPDWCISRQRTWGVPMSLFVHKETEELHPRTAELIEAVAKRVEADGIQAWWDLDPADVLGADADNYVKVPDTLDVWFDSGSTHASVVDVRPEFGGHAADMYLEGSDQHRGWFMSSLMISTAIKGKAPYRQVLTHGFTVDGQGRKMSKSIGNTVSPQDVMNKLGADILRLWIGSTDYSGEIAVSDEILKRSADAYRRIRNTARFLLANLNGFDPQKDSVKPEDMVVLDRWAVGCAKAAQEEILEAYESYDFHRVVQRLMQFCSIEMGSFYLDIIKDRQYTAKSDSVARRSCQTALYHISEALVRWMAPIMSFTADEIWSYLPGKRAQYVFTEEWYDGLFGLDASETMNDAFWADILKVRSEVNKVIEQARNDKRIGGSLEASVTLYADANLAGKLNQLRQELHFALLTSKALVERYENAPDSAQATELTGLKIALSEAEGHKCPRCWHYETDIGSNADHPEVCGRCATNVGGNGEERKFV.

Residues 58-68 carry the 'HIGH' region motif; it reads PYANGSIHIGH. Residue Glu-561 participates in L-isoleucyl-5'-AMP binding. Residues 602–606 carry the 'KMSKS' region motif; the sequence is KMSKS. Lys-605 contacts ATP. Cys-900, Cys-903, Cys-920, and Cys-923 together coordinate Zn(2+).

This sequence belongs to the class-I aminoacyl-tRNA synthetase family. IleS type 1 subfamily. As to quaternary structure, monomer. Zn(2+) serves as cofactor.

It is found in the cytoplasm. It catalyses the reaction tRNA(Ile) + L-isoleucine + ATP = L-isoleucyl-tRNA(Ile) + AMP + diphosphate. Functionally, catalyzes the attachment of isoleucine to tRNA(Ile). As IleRS can inadvertently accommodate and process structurally similar amino acids such as valine, to avoid such errors it has two additional distinct tRNA(Ile)-dependent editing activities. One activity is designated as 'pretransfer' editing and involves the hydrolysis of activated Val-AMP. The other activity is designated 'posttransfer' editing and involves deacylation of mischarged Val-tRNA(Ile). This chain is Isoleucine--tRNA ligase, found in Pectobacterium carotovorum subsp. carotovorum (strain PC1).